Here is a 209-residue protein sequence, read N- to C-terminus: uncharacterized protein (209 aa).

Positions 13–75 (LSAVDKQMDT…AINLAAVMTD (63 aa)) form a coiled coil. The disordered stretch occupies residues 107 to 135 (ATPLPSSNTNNEQSMSTYSSSISGKTSET). Polar residues predominate over residues 110 to 119 (LPSSNTNNEQ). The span at 120–133 (SMSTYSSSISGKTS) shows a compositional bias: low complexity.

The protein belongs to the asfivirus K205R family.

Its subcellular location is the host cytoplasm. Its function is as follows. Induces host endoplasmic reticulum stress and consequently activates autophagy and NF-kappa-B signaling pathway. In turn, may induce autophagy-mediated STING1 degradation and innate immune evasion. This is an uncharacterized protein from Ornithodoros (relapsing fever ticks).